We begin with the raw amino-acid sequence, 152 residues long: Deoxyuridine 5'-triphosphate nucleotidohydrolase (152 aa).

Substrate contacts are provided by residues 72 to 74 (RSG), Asn85, and 89 to 91 (TID).

Belongs to the dUTPase family. Mg(2+) is required as a cofactor.

It catalyses the reaction dUTP + H2O = dUMP + diphosphate + H(+). Its pathway is pyrimidine metabolism; dUMP biosynthesis; dUMP from dCTP (dUTP route): step 2/2. In terms of biological role, this enzyme is involved in nucleotide metabolism: it produces dUMP, the immediate precursor of thymidine nucleotides and it decreases the intracellular concentration of dUTP so that uracil cannot be incorporated into DNA. The chain is Deoxyuridine 5'-triphosphate nucleotidohydrolase from Afipia carboxidovorans (strain ATCC 49405 / DSM 1227 / KCTC 32145 / OM5) (Oligotropha carboxidovorans).